The primary structure comprises 194 residues: Peptidyl-tRNA hydrolase (194 aa).

Y16 is a binding site for tRNA. The active-site Proton acceptor is the H21. Residues F67, N69, and N115 each contribute to the tRNA site.

Belongs to the PTH family. As to quaternary structure, monomer.

It is found in the cytoplasm. It carries out the reaction an N-acyl-L-alpha-aminoacyl-tRNA + H2O = an N-acyl-L-amino acid + a tRNA + H(+). Functionally, hydrolyzes ribosome-free peptidyl-tRNAs (with 1 or more amino acids incorporated), which drop off the ribosome during protein synthesis, or as a result of ribosome stalling. Its function is as follows. Catalyzes the release of premature peptidyl moieties from peptidyl-tRNA molecules trapped in stalled 50S ribosomal subunits, and thus maintains levels of free tRNAs and 50S ribosomes. In Shigella dysenteriae serotype 1 (strain Sd197), this protein is Peptidyl-tRNA hydrolase.